A 284-amino-acid chain; its full sequence is 4-hydroxybenzoate octaprenyltransferase (284 aa).

A run of 8 helical transmembrane segments spans residues 16–36 (PIGILLLLWPTLWALWLASDG), 40–60 (WTLLAIFTLGTILMRSAGCAI), 91–111 (LLVALALALLSFALIWPLNTL), 132–152 (FFAIPQAYLGIAFGFGIPMGF), 157–177 (NTVPAAAWWLLVANVFWAVAY), 206–226 (VAAVMFCYAVTLGLIFIVGWQ), 231–251 (TWFAAGMLIATGCAIYHYTLI), and 259–279 (CFAAFRHNNWLGAAIFGGVVL).

It belongs to the UbiA prenyltransferase family. Mg(2+) serves as cofactor.

Its subcellular location is the cell inner membrane. It carries out the reaction all-trans-octaprenyl diphosphate + 4-hydroxybenzoate = 4-hydroxy-3-(all-trans-octaprenyl)benzoate + diphosphate. It participates in cofactor biosynthesis; ubiquinone biosynthesis. Its function is as follows. Catalyzes the prenylation of para-hydroxybenzoate (PHB) with an all-trans polyprenyl group. Mediates the second step in the final reaction sequence of ubiquinone-8 (UQ-8) biosynthesis, which is the condensation of the polyisoprenoid side chain with PHB, generating the first membrane-bound Q intermediate 3-octaprenyl-4-hydroxybenzoate. This chain is 4-hydroxybenzoate octaprenyltransferase, found in Herminiimonas arsenicoxydans.